We begin with the raw amino-acid sequence, 390 residues long: Chorismate synthase 2 (390 aa).

Positions 39 and 45 each coordinate NADP(+). FMN is bound by residues 132-134 (RSS), 253-254 (NA), glycine 298, 313-317 (KPIPT), and arginine 339.

Belongs to the chorismate synthase family. In terms of assembly, homotetramer. Requires FMNH2 as cofactor.

It catalyses the reaction 5-O-(1-carboxyvinyl)-3-phosphoshikimate = chorismate + phosphate. Its pathway is metabolic intermediate biosynthesis; chorismate biosynthesis; chorismate from D-erythrose 4-phosphate and phosphoenolpyruvate: step 7/7. Functionally, catalyzes the anti-1,4-elimination of the C-3 phosphate and the C-6 proR hydrogen from 5-enolpyruvylshikimate-3-phosphate (EPSP) to yield chorismate, which is the branch point compound that serves as the starting substrate for the three terminal pathways of aromatic amino acid biosynthesis. This reaction introduces a second double bond into the aromatic ring system. The polypeptide is Chorismate synthase 2 (Bacillus cereus (strain ZK / E33L)).